The chain runs to 191 residues: Ribosome maturation factor RimM (191 aa).

The 84-residue stretch at 102-185 folds into the PRC barrel domain; that stretch reads EEEYHVSQLI…RIEINPPKGL (84 aa).

This sequence belongs to the RimM family. In terms of assembly, binds ribosomal protein uS19.

The protein resides in the cytoplasm. An accessory protein needed during the final step in the assembly of 30S ribosomal subunit, possibly for assembly of the head region. Essential for efficient processing of 16S rRNA. May be needed both before and after RbfA during the maturation of 16S rRNA. It has affinity for free ribosomal 30S subunits but not for 70S ribosomes. The protein is Ribosome maturation factor RimM of Crocosphaera subtropica (strain ATCC 51142 / BH68) (Cyanothece sp. (strain ATCC 51142)).